Here is a 255-residue protein sequence, read N- to C-terminus: Type III pantothenate kinase (255 aa).

6–13 (DVGNTNTV) is an ATP binding site. Substrate contacts are provided by residues Y100 and 107–110 (GADR). D109 serves as the catalytic Proton acceptor. K(+) is bound at residue D129. T132 serves as a coordination point for ATP. T184 provides a ligand contact to substrate.

Belongs to the type III pantothenate kinase family. As to quaternary structure, homodimer. Requires NH4(+) as cofactor. K(+) is required as a cofactor.

It localises to the cytoplasm. The enzyme catalyses (R)-pantothenate + ATP = (R)-4'-phosphopantothenate + ADP + H(+). The protein operates within cofactor biosynthesis; coenzyme A biosynthesis; CoA from (R)-pantothenate: step 1/5. In terms of biological role, catalyzes the phosphorylation of pantothenate (Pan), the first step in CoA biosynthesis. This is Type III pantothenate kinase from Syntrophotalea carbinolica (strain DSM 2380 / NBRC 103641 / GraBd1) (Pelobacter carbinolicus).